The chain runs to 33 residues: Brevinin-2Ea (33 aa).

A disulfide bridge connects residues C27 and C33.

This sequence belongs to the frog skin active peptide (FSAP) family. Brevinin subfamily. In terms of tissue distribution, expressed by the skin glands.

Its subcellular location is the secreted. Shows antibacterial activity against representative Gram-negative and Gram-positive bacterial species, and hemolytic activity. The polypeptide is Brevinin-2Ea (Pelophylax lessonae (Pool frog)).